A 388-amino-acid polypeptide reads, in one-letter code: Processive diacylglycerol beta-glucosyltransferase (388 aa).

It belongs to the glycosyltransferase 28 family. UgtP subfamily.

It is found in the cell membrane. The enzyme catalyses a 1,2-diacyl-3-O-(beta-D-glucopyranosyl)-sn-glycerol + UDP-alpha-D-glucose = a 1,2-diacyl-3-O-(beta-D-Glc-(1-&gt;6)-beta-D-Glc)-sn-glycerol + UDP + H(+). The catalysed reaction is a 1,2-diacyl-3-O-(beta-D-Glc-(1-&gt;6)-beta-D-Glc)-sn-glycerol + UDP-alpha-D-glucose = a 1,2-diacyl-3-O-(beta-D-Glc-(1-&gt;6)-beta-D-Glc-(1-&gt;6)-beta-D-Glc)-sn-glycerol + UDP + H(+). It carries out the reaction a 1,2-diacyl-sn-glycerol + UDP-alpha-D-glucose = a 1,2-diacyl-3-O-(beta-D-glucopyranosyl)-sn-glycerol + UDP + H(+). Its pathway is glycolipid metabolism; diglucosyl-diacylglycerol biosynthesis. Processive glucosyltransferase involved in the biosynthesis of both the bilayer- and non-bilayer-forming membrane glucolipids. Is able to successively transfer up to three glucosyl residues to diacylglycerol (DAG), thereby catalyzing the formation of beta-monoglucosyl-DAG (3-O-(beta-D-glucopyranosyl)-1,2-diacyl-sn-glycerol), beta-diglucosyl-DAG (3-O-(beta-D-glucopyranosyl-beta-(1-&gt;6)-D-glucopyranosyl)-1,2-diacyl-sn-glycerol) and beta-triglucosyl-DAG (3-O-(beta-D-glucopyranosyl-beta-(1-&gt;6)-D-glucopyranosyl-beta-(1-&gt;6)-D-glucopyranosyl)-1,2-diacyl-sn-glycerol). Beta-diglucosyl-DAG is the predominant glycolipid found in Bacillales and is also used as a membrane anchor for lipoteichoic acid (LTA). The protein is Processive diacylglycerol beta-glucosyltransferase of Bacillus cereus (strain G9842).